Here is a 119-residue protein sequence, read N- to C-terminus: Large ribosomal subunit protein bL20 (119 aa).

This sequence belongs to the bacterial ribosomal protein bL20 family.

In terms of biological role, binds directly to 23S ribosomal RNA and is necessary for the in vitro assembly process of the 50S ribosomal subunit. It is not involved in the protein synthesizing functions of that subunit. This Streptococcus mutans serotype c (strain ATCC 700610 / UA159) protein is Large ribosomal subunit protein bL20.